We begin with the raw amino-acid sequence, 369 residues long: tRNA pseudouridine synthase D (369 aa).

D80 acts as the Nucleophile in catalysis. Positions 156-318 (GIPNWFGEQR…LKQERRALRL (163 aa)) constitute a TRUD domain.

The protein belongs to the pseudouridine synthase TruD family.

The enzyme catalyses uridine(13) in tRNA = pseudouridine(13) in tRNA. Its function is as follows. Responsible for synthesis of pseudouridine from uracil-13 in transfer RNAs. This chain is tRNA pseudouridine synthase D, found in Xanthomonas euvesicatoria pv. vesicatoria (strain 85-10) (Xanthomonas campestris pv. vesicatoria).